A 247-amino-acid chain; its full sequence is Adenosylcobinamide-GDP ribazoletransferase (247 aa).

The next 4 membrane-spanning stretches (helical) occupy residues 34-54, 59-79, 113-133, and 194-214; these read IITF…VFMV, CGVP…TGGF, GGLA…ELAL, and VLLP…AIFI.

This sequence belongs to the CobS family. It depends on Mg(2+) as a cofactor.

Its subcellular location is the cell inner membrane. It carries out the reaction alpha-ribazole + adenosylcob(III)inamide-GDP = adenosylcob(III)alamin + GMP + H(+). The enzyme catalyses alpha-ribazole 5'-phosphate + adenosylcob(III)inamide-GDP = adenosylcob(III)alamin 5'-phosphate + GMP + H(+). The protein operates within cofactor biosynthesis; adenosylcobalamin biosynthesis; adenosylcobalamin from cob(II)yrinate a,c-diamide: step 7/7. In terms of biological role, joins adenosylcobinamide-GDP and alpha-ribazole to generate adenosylcobalamin (Ado-cobalamin). Also synthesizes adenosylcobalamin 5'-phosphate from adenosylcobinamide-GDP and alpha-ribazole 5'-phosphate. This chain is Adenosylcobinamide-GDP ribazoletransferase, found in Escherichia coli (strain ATCC 8739 / DSM 1576 / NBRC 3972 / NCIMB 8545 / WDCM 00012 / Crooks).